Consider the following 107-residue polypeptide: Phosphoribosyl-ATP pyrophosphatase (107 aa).

This sequence belongs to the PRA-PH family.

It localises to the cytoplasm. It carries out the reaction 1-(5-phospho-beta-D-ribosyl)-ATP + H2O = 1-(5-phospho-beta-D-ribosyl)-5'-AMP + diphosphate + H(+). Its pathway is amino-acid biosynthesis; L-histidine biosynthesis; L-histidine from 5-phospho-alpha-D-ribose 1-diphosphate: step 2/9. The chain is Phosphoribosyl-ATP pyrophosphatase from Novosphingobium aromaticivorans (strain ATCC 700278 / DSM 12444 / CCUG 56034 / CIP 105152 / NBRC 16084 / F199).